The chain runs to 299 residues: Formylglycine-generating enzyme (299 aa).

Positions 263 and 268 each coordinate Cu cation.

This sequence belongs to the sulfatase-modifying factor family. It depends on Cu cation as a cofactor.

It catalyses the reaction L-cysteinyl-[sulfatase] + 2 a thiol + O2 = an organic disulfide + 3-oxo-L-alanyl-[sulfatase] + hydrogen sulfide + H2O + H(+). It participates in protein modification; sulfatase oxidation. Its function is as follows. Oxidase that catalyzes the conversion of cysteine to 3-oxoalanine on target proteins. 3-oxoalanine modification, which is also named formylglycine (fGly), occurs in the maturation of arylsulfatases and some alkaline phosphatases that use the hydrated form of 3-oxoalanine as a catalytic nucleophile. The polypeptide is Formylglycine-generating enzyme (Mycobacterium tuberculosis (strain ATCC 25618 / H37Rv)).